Here is a 335-residue protein sequence, read N- to C-terminus: MTAKAPPAPHDPARAIDPILERIFSFPRRHFLSAGDLNAPQATDLLDLADAFVAFNRQTSKSLDILKGRTLMNLFFENSTRTQSSFEIAGKRLGADVVNMSPRTSSITKGETLIDTAVTLNAMRPDLLVVRHASSGAASLLSQKVSGSVINAGDGQHEHPTQAVLDALSIRRAFGRVSGLTVAICGDVLHSRVARSNVALLHTLGASVRLVGPPTLMPAQAERWGVTVHHDMKAGIAGADVVMMLRLQLERMQGAFVPSTREYFRFYGLDREKLARAAPKAKVMHPGPMNRGVEIDSDVADDPEISLIQDQVEMGVAARMAVLASLAHRLEEHGQ.

Carbamoyl phosphate-binding residues include Arg-81 and Thr-82. Lys-109 is an L-aspartate binding site. 3 residues coordinate carbamoyl phosphate: Arg-131, His-159, and Gln-162. 2 residues coordinate L-aspartate: Arg-192 and Arg-246. 2 residues coordinate carbamoyl phosphate: Gly-287 and Pro-288.

This sequence belongs to the aspartate/ornithine carbamoyltransferase superfamily. ATCase family. Heterododecamer (2C3:3R2) of six catalytic PyrB chains organized as two trimers (C3), and six regulatory PyrI chains organized as three dimers (R2).

It carries out the reaction carbamoyl phosphate + L-aspartate = N-carbamoyl-L-aspartate + phosphate + H(+). The protein operates within pyrimidine metabolism; UMP biosynthesis via de novo pathway; (S)-dihydroorotate from bicarbonate: step 2/3. Its function is as follows. Catalyzes the condensation of carbamoyl phosphate and aspartate to form carbamoyl aspartate and inorganic phosphate, the committed step in the de novo pyrimidine nucleotide biosynthesis pathway. The polypeptide is Aspartate carbamoyltransferase catalytic subunit (Caulobacter sp. (strain K31)).